The sequence spans 331 residues: NADH-quinone oxidoreductase subunit H 2 (331 aa).

Helical transmembrane passes span 6-26 (AGFLVLIAKLTIVLAVLLLVA), 79-99 (IFMLAPAVVAATALLVFAVIP), 120-140 (VGLLYFFALSSLGVYGVALGG), 155-175 (GAAQMISYELSLGLAIVPVVM), 193-213 (PFILTQPVAFAIFVISAMAEI), 242-262 (LFFLGEYVNMQVLGGLVAVLF), 271-291 (LPPVVWLFIKIVLVALIMIWV), and 310-330 (VLIPLALVNIMVTGAWVLWMG).

The protein belongs to the complex I subunit 1 family. NDH-1 is composed of 14 different subunits. Subunits NuoA, H, J, K, L, M, N constitute the membrane sector of the complex.

The protein resides in the cell inner membrane. The catalysed reaction is a quinone + NADH + 5 H(+)(in) = a quinol + NAD(+) + 4 H(+)(out). In terms of biological role, NDH-1 shuttles electrons from NADH, via FMN and iron-sulfur (Fe-S) centers, to quinones in the respiratory chain. The immediate electron acceptor for the enzyme in this species is believed to be ubiquinone. Couples the redox reaction to proton translocation (for every two electrons transferred, four hydrogen ions are translocated across the cytoplasmic membrane), and thus conserves the redox energy in a proton gradient. This subunit may bind ubiquinone. This is NADH-quinone oxidoreductase subunit H 2 from Syntrophobacter fumaroxidans (strain DSM 10017 / MPOB).